We begin with the raw amino-acid sequence, 213 residues long: Imidazole glycerol phosphate synthase subunit HisH 1 (213 aa).

The Glutamine amidotransferase type-1 domain maps to 3-213 (SVSILDYGVG…LSIIQQFLQI (211 aa)). Cys-81 (nucleophile) is an active-site residue. Active-site residues include His-195 and Glu-197.

As to quaternary structure, heterodimer of HisH and HisF.

Its subcellular location is the cytoplasm. It carries out the reaction 5-[(5-phospho-1-deoxy-D-ribulos-1-ylimino)methylamino]-1-(5-phospho-beta-D-ribosyl)imidazole-4-carboxamide + L-glutamine = D-erythro-1-(imidazol-4-yl)glycerol 3-phosphate + 5-amino-1-(5-phospho-beta-D-ribosyl)imidazole-4-carboxamide + L-glutamate + H(+). The enzyme catalyses L-glutamine + H2O = L-glutamate + NH4(+). It functions in the pathway amino-acid biosynthesis; L-histidine biosynthesis; L-histidine from 5-phospho-alpha-D-ribose 1-diphosphate: step 5/9. Functionally, IGPS catalyzes the conversion of PRFAR and glutamine to IGP, AICAR and glutamate. The HisH subunit provides the glutamine amidotransferase activity that produces the ammonia necessary to HisF for the synthesis of IGP and AICAR. The polypeptide is Imidazole glycerol phosphate synthase subunit HisH 1 (Legionella pneumophila (strain Lens)).